The sequence spans 249 residues: 5'-nucleotidase SurE (249 aa).

A divalent metal cation contacts are provided by Asp8, Asp9, Ser39, and Asn91.

It belongs to the SurE nucleotidase family. A divalent metal cation is required as a cofactor.

It localises to the cytoplasm. It catalyses the reaction a ribonucleoside 5'-phosphate + H2O = a ribonucleoside + phosphate. Nucleotidase that shows phosphatase activity on nucleoside 5'-monophosphates. The sequence is that of 5'-nucleotidase SurE from Pseudomonas paraeruginosa (strain DSM 24068 / PA7) (Pseudomonas aeruginosa (strain PA7)).